The sequence spans 368 residues: MNLDKLQNWLQENGMDVAYVSSPTTINYFTGFITDPEERIFKLFAFKDAEPFLFCPALNYEEAKASAWDGDVVGYLDSEDPWSKIAEEIKKRTKDYQNWAVEKNGLTVAHYQALHAQFPDSDFSKDLSDFIAHIRLFKTESELVKLRKAGEEADFAFQIGFEALRNGVTERAVVSQIEYQLKLQKGVMQTSFDTIVQAGKNAANPHQGPSMNTVQPNELVLFDLGTMHEGYASDSSRTVAYGEPTDKMREIYEVNRTAQQAAIDAAKPGMTASELDGVARKIITDAGYGEYFIHRLGHGIGMEVHEFPSIANGNDVVLEEGMCFSIEPGIYIPGFAGVRIEDCGVLTKDGFKPFTHTSKELKVLPVKE.

Residues D223, D234, H298, E327, and E341 each coordinate Mn(2+).

Belongs to the peptidase M24B family. It depends on Mn(2+) as a cofactor.

The protein resides in the cytoplasm. The enzyme catalyses Xaa-L-Pro dipeptide + H2O = an L-alpha-amino acid + L-proline. The chain is Xaa-Pro dipeptidase (pepQ) from Lactobacillus delbrueckii subsp. lactis.